A 208-amino-acid chain; its full sequence is Sec-independent protein translocase protein TatB (208 aa).

Residues 1-21 (MFDIGVGELTLIAVVALVVLG) form a helical membrane-spanning segment. Positions 178–189 (APEPVAVAPVDA) are enriched in low complexity. A disordered region spans residues 178–208 (APEPVAVAPVDAGTPAAWTPSAPAKLQEKQP).

Belongs to the TatB family. As to quaternary structure, the Tat system comprises two distinct complexes: a TatABC complex, containing multiple copies of TatA, TatB and TatC subunits, and a separate TatA complex, containing only TatA subunits. Substrates initially bind to the TatABC complex, which probably triggers association of the separate TatA complex to form the active translocon.

Its subcellular location is the cell inner membrane. Part of the twin-arginine translocation (Tat) system that transports large folded proteins containing a characteristic twin-arginine motif in their signal peptide across membranes. Together with TatC, TatB is part of a receptor directly interacting with Tat signal peptides. TatB may form an oligomeric binding site that transiently accommodates folded Tat precursor proteins before their translocation. In Xanthomonas euvesicatoria pv. vesicatoria (strain 85-10) (Xanthomonas campestris pv. vesicatoria), this protein is Sec-independent protein translocase protein TatB.